Consider the following 494-residue polypeptide: Cobyric acid synthase (494 aa).

The GATase cobBQ-type domain maps to 252-444; sequence DLNIAVIRLP…LHGLFDNGPW (193 aa). The active-site Nucleophile is C333. H436 is a catalytic residue.

The protein belongs to the CobB/CobQ family. CobQ subfamily.

Its pathway is cofactor biosynthesis; adenosylcobalamin biosynthesis. In terms of biological role, catalyzes amidations at positions B, D, E, and G on adenosylcobyrinic A,C-diamide. NH(2) groups are provided by glutamine, and one molecule of ATP is hydrogenolyzed for each amidation. In Nostoc punctiforme (strain ATCC 29133 / PCC 73102), this protein is Cobyric acid synthase.